The following is a 120-amino-acid chain: Large ribosomal subunit protein uL18 (120 aa).

It belongs to the universal ribosomal protein uL18 family. Part of the 50S ribosomal subunit; part of the 5S rRNA/L5/L18/L25 subcomplex. Contacts the 5S and 23S rRNAs.

Its function is as follows. This is one of the proteins that bind and probably mediate the attachment of the 5S RNA into the large ribosomal subunit, where it forms part of the central protuberance. The chain is Large ribosomal subunit protein uL18 from Rippkaea orientalis (strain PCC 8801 / RF-1) (Cyanothece sp. (strain PCC 8801)).